Here is a 176-residue protein sequence, read N- to C-terminus: Trypsin inhibitor 1B (176 aa).

Intrachain disulfides connect Cys39–Cys83 and Cys132–Cys143.

This sequence belongs to the protease inhibitor I3 (leguminous Kunitz-type inhibitor) family.

Functionally, inhibits trypsin stoichiometrically. This Erythrina variegata (Indian coral tree) protein is Trypsin inhibitor 1B.